A 167-amino-acid chain; its full sequence is Small ribosomal subunit protein uS5 (167 aa).

The region spanning 12–75 (LQEKLITVNR…EQARRNMITI (64 aa)) is the S5 DRBM domain.

The protein belongs to the universal ribosomal protein uS5 family. As to quaternary structure, part of the 30S ribosomal subunit. Contacts proteins S4 and S8.

Its function is as follows. With S4 and S12 plays an important role in translational accuracy. Located at the back of the 30S subunit body where it stabilizes the conformation of the head with respect to the body. This Buchnera aphidicola subsp. Acyrthosiphon pisum (strain APS) (Acyrthosiphon pisum symbiotic bacterium) protein is Small ribosomal subunit protein uS5.